The sequence spans 573 residues: Anti-Muellerian hormone type-2 receptor (573 aa).

An N-terminal signal peptide occupies residues 1-17 (MLGSLGLWALLPTAVEA). The Extracellular segment spans residues 18 to 149 (PPNRRTCVFF…APGESIWMAL (132 aa)). 2 cysteine pairs are disulfide-bonded: Cys-55–Cys-79 and Cys-92–Cys-109. N-linked (GlcNAc...) asparagine glycosylation occurs at Asn-66. An N-linked (GlcNAc...) asparagine glycan is attached at Asn-119. The helical transmembrane segment at 150–170 (VLLGLFLLLLLLLGSIILALL) threads the bilayer. The Cytoplasmic segment spans residues 171 to 573 (QRKNYRVRGE…PQPACTLSPV (403 aa)). The 316-residue stretch at 203–518 (LCFSQVIREG…AHPQESHPFP (316 aa)) folds into the Protein kinase domain. Residues 209-217 (IREGGHAVV) and Lys-230 contribute to the ATP site. The active-site Proton acceptor is the Asp-333.

The protein belongs to the protein kinase superfamily. TKL Ser/Thr protein kinase family. TGFB receptor subfamily. As to quaternary structure, interacts with type I receptor ACVR1. Mg(2+) is required as a cofactor. Mn(2+) serves as cofactor.

The protein resides in the membrane. It carries out the reaction L-threonyl-[receptor-protein] + ATP = O-phospho-L-threonyl-[receptor-protein] + ADP + H(+). The catalysed reaction is L-seryl-[receptor-protein] + ATP = O-phospho-L-seryl-[receptor-protein] + ADP + H(+). On ligand binding, forms a receptor complex consisting of two type II and two type I transmembrane serine/threonine kinases. Type II receptors phosphorylate and activate type I receptors which autophosphorylate, then bind and activate SMAD transcriptional regulators. Receptor for anti-Muellerian hormone. This Homo sapiens (Human) protein is Anti-Muellerian hormone type-2 receptor (AMHR2).